A 428-amino-acid polypeptide reads, in one-letter code: Histone deacetylase 3 (428 aa).

The tract at residues 3-316 (KTVAYFYDPD…WTYETSLLVE (314 aa)) is histone deacetylase. His17, Gly21, and Lys25 together coordinate 1D-myo-inositol 1,4,5,6-tetrakisphosphate. Residue His135 is part of the active site. Zn(2+)-binding residues include Asp170, His172, and Asp259. Arg265 contributes to the 1D-myo-inositol 1,4,5,6-tetrakisphosphate binding site. Basic and acidic residues-rich tracts occupy residues 388–405 (DRTD…ENYS) and 415–428 (DGDH…DVEI). A disordered region spans residues 388–428 (DRTDEADAEERGPEENYSRPEAPNEFYDGDHDNDKESDVEI). Position 424 is a phosphoserine (Ser424).

Belongs to the histone deacetylase family. HD type 1 subfamily. Interacts with HDAC7 and HDAC9. Interacts with DAXX, KDM4A, HDAC10 and DACH1. Found in a complex with NCOR1 and NCOR2. Component of the N-Cor repressor complex, at least composed of NCOR1, NCOR2, HDAC3, TBL1X, TBL1R, CORO2A and GPS2. Interacts with BCOR, MJD2A/JHDM3A, NRIP1, PRDM6 and SRY. Interacts with BTBD14B. Interacts with GLIS2. Interacts (via the DNA-binding domain) with NR2C1; the interaction recruits phosphorylated NR2C1 to PML bodies for sumoylation. Component of the Notch corepressor complex. Interacts with CBFA2T3 and NKAP. Interacts with APEX1; the interaction is not dependent on the acetylated status of APEX1. Interacts with ZMYND15. Interacts with SMRT/NCOR2 and BCL6 on DNA enhancer elements. Interacts with INSM1. Interacts with XBP1 isoform 1; the interaction occurs in endothelial cell (EC) under disturbed flow. Interacts (via C-terminus) with CCAR2 (via N-terminus). Interacts with and deacetylates MEF2D. Interacts with BEND3. Interacts with NKAPL. Interacts with DHX36; this interaction occurs in a RNA-dependent manner. Interacts weakly with CRY1; this interaction is enhanced in the presence of FBXL3. Interacts with FBXL3 and BMAL1. Interacts with NCOR1. Interacts with RARA. Interacts with SETD5. In terms of assembly, (Microbial infection) Interacts with human cytomegalovirus (HHV-5) immediate early protein IE1; this interaction decreases histone acetylation and allows transcriptional activation by the virus. It depends on Zn(2+) as a cofactor. Post-translationally, sumoylated in vitro. In terms of processing, deubiquitinated on 'Lys-63'-linked ubiquitin chains by USP38; leading to a decreased level of histone acetylation. In terms of tissue distribution, widely expressed.

The protein resides in the nucleus. It localises to the chromosome. It is found in the cytoplasm. The protein localises to the cytosol. The enzyme catalyses N(6)-acetyl-L-lysyl-[histone] + H2O = L-lysyl-[histone] + acetate. The catalysed reaction is N(6)-acetyl-L-lysyl-[protein] + H2O = L-lysyl-[protein] + acetate. It carries out the reaction N(6)-(2E)-butenoyl-L-lysyl-[protein] + H2O = (2E)-2-butenoate + L-lysyl-[protein]. It catalyses the reaction N(6)-(2-hydroxyisobutanoyl)-L-lysyl-[protein] + H2O = 2-hydroxy-2-methylpropanoate + L-lysyl-[protein]. The enzyme catalyses N(6)-[(S)-lactoyl]-L-lysyl-[protein] + H2O = (S)-lactate + L-lysyl-[protein]. Inositol tetraphosphate (1D-myo-inositol 1,4,5,6-tetrakisphosphate) promotes the histone deacetylase activity by acting as an intermolecular glue between HDAC3 and NCOR2, thereby promoting its association with the N-Cor complex, a prerequisite for the histone deacetylase activity. In terms of biological role, histone deacetylase that catalyzes the deacetylation of lysine residues on the N-terminal part of the core histones (H2A, H2B, H3 and H4), and some other non-histone substrates. Histone deacetylation gives a tag for epigenetic repression and plays an important role in transcriptional regulation, cell cycle progression and developmental events. Histone deacetylases act via the formation of large multiprotein complexes, such as N-Cor repressor complex, which activate the histone deacetylase activity. Participates in the BCL6 transcriptional repressor activity by deacetylating the H3 'Lys-27' (H3K27) on enhancer elements, antagonizing EP300 acetyltransferase activity and repressing proximal gene expression. Acts as a molecular chaperone for shuttling phosphorylated NR2C1 to PML bodies for sumoylation. Contributes, together with XBP1 isoform 1, to the activation of NFE2L2-mediated HMOX1 transcription factor gene expression in a PI(3)K/mTORC2/Akt-dependent signaling pathway leading to endothelial cell (EC) survival under disturbed flow/oxidative stress. Regulates both the transcriptional activation and repression phases of the circadian clock in a deacetylase activity-independent manner. During the activation phase, promotes the accumulation of ubiquitinated BMAL1 at the E-boxes and during the repression phase, blocks FBXL3-mediated CRY1/2 ubiquitination and promotes the interaction of CRY1 and BMAL1. The NCOR1-HDAC3 complex regulates the circadian expression of the core clock gene BMAL1 and the genes involved in lipid metabolism in the liver. Also functions as a deacetylase for non-histone targets, such as KAT5, MEF2D, MAPK14, RARA and STAT3. Serves as a corepressor of RARA, mediating its deacetylation and repression, leading to inhibition of RARE DNA element binding. In association with RARA, plays a role in the repression of microRNA-10a and thereby in the inflammatory response. In addition to protein deacetylase activity, also acts as a protein-lysine deacylase by recognizing other acyl groups: catalyzes removal of (2E)-butenoyl (crotonyl), lactoyl (lactyl) and 2-hydroxyisobutanoyl (2-hydroxyisobutyryl) acyl groups from lysine residues, leading to protein decrotonylation, delactylation and de-2-hydroxyisobutyrylation, respectively. Catalyzes decrotonylation of MAPRE1/EB1. Mediates delactylation NBN/NBS1, thereby inhibiting DNA double-strand breaks (DSBs) via homologous recombination (HR). The chain is Histone deacetylase 3 (HDAC3) from Homo sapiens (Human).